Reading from the N-terminus, the 185-residue chain is Ribosome-recycling factor (185 aa).

The protein belongs to the RRF family.

The protein localises to the cytoplasm. In terms of biological role, responsible for the release of ribosomes from messenger RNA at the termination of protein biosynthesis. May increase the efficiency of translation by recycling ribosomes from one round of translation to another. This is Ribosome-recycling factor from Streptococcus pyogenes serotype M28 (strain MGAS6180).